We begin with the raw amino-acid sequence, 330 residues long: PDZ and LIM domain protein 4 (330 aa).

Residues 1 to 84 form the PDZ domain; the sequence is MPHSVTLRGP…HLTLSVSRPE (84 aa). Residues 104 to 180 are disordered; that stretch reads IDPEIQDGSP…DPARGLPRSR (77 aa). Low complexity predominate over residues 111–121; it reads GSPTTSRRPSG. Serine 112, serine 116, serine 120, and serine 135 each carry phosphoserine. Over residues 148 to 163 the composition is skewed to polar residues; that stretch reads NGSSEATLPAQMSTLH. Residues 253–312 enclose the LIM zinc-binding domain; the sequence is PECTRCGHGIVGTIVKARDKLYHPECFMCSDCGLNLKQRGYFFLDERLYCESHAKARVKP.

Homodimer. Interacts with PTPN13. Interacts (via C-terminus only or via combined C-terminus and LIM domain, but not LIM domain only) with PTPN13 (via the second or fourth PDZ domains). Found in a complex with PTPN13 and TRIP6. Interacts (via PDZ domain) with ACTN1 and ACTN2 (via C-terminal SDL residues). Interacts (via PDZ domain) with TRIP6 (via the second LIM domain or via the third LIM domain plus C-terminus). Interacts (via LIM domain) with GRIA1 (via C-terminus); this interaction as well as the interaction with alpha-actinin is required for their colocalization in early endosomes. Interacts with PDLIM1. Forms (via LIM domain) a heterodimer with PDLIM3. Interacts directly with SRC (via kinase domain and to a lesser extent the SH2 domain). Isoform 2 interacts with NQO1. NQO1-stabilized isoform 2 heterodimerizes with isoform 1. In terms of processing, phosphorylated on tyrosine residue(s). Can be dephosphorylated by PTPN13. Found in brain.

It is found in the cytoplasm. Its subcellular location is the cytoskeleton. It localises to the nucleus. The protein resides in the perinuclear region. The protein localises to the cell projection. It is found in the lamellipodium. Its subcellular location is the dendritic spine. It localises to the early endosome membrane. The protein resides in the recycling endosome membrane. The protein localises to the synapse. It is found in the synaptosome. Functionally, suppresses SRC activation by recognizing and binding to active SRC and facilitating PTPN13-mediated dephosphorylation of SRC 'Tyr-419' leading to its inactivation. Inactivated SRC dissociates from this protein allowing the initiation of a new SRC inactivation cycle. Involved in reorganization of the actin cytoskeleton. In nonmuscle cells, binds to ACTN1 (alpha-actinin-1), increases the affinity of ACTN1 to F-actin (filamentous actin), and promotes formation of actin stress fibers. Involved in regulation of the synaptic AMPA receptor transport in dendritic spines of hippocampal pyramidal neurons directing the receptors toward an insertion at the postsynaptic membrane. Links endosomal surface-internalized GRIA1-containing AMPA receptors to the alpha-actinin/actin cytoskeleton. Increases AMPA receptor-mediated excitatory postsynaptic currents in neurons. Its function is as follows. Involved in reorganization of the actin cytoskeleton and in regulation of cell migration. In response to oxidative stress, binds to NQO1, which stabilizes it and protects it from ubiquitin-independent degradation by the core 20S proteasome. Stabilized protein is able to heterodimerize with isoform 1 changing the subcellular location of it from cytoskeleton and nuclei to cytosol, leading to loss of isoforms 1 ability to induce formation of actin stress fibers. Counteracts the effects produced by isoform 1 on organization of actin cytoskeleton and cell motility to fine-tune actin cytoskeleton rearrangement and to attenuate cell migration. The sequence is that of PDZ and LIM domain protein 4 (PDLIM4) from Homo sapiens (Human).